The following is a 55-amino-acid chain: UPF0291 protein CA_C2726 (55 aa).

The protein belongs to the UPF0291 family.

Its subcellular location is the cytoplasm. In Clostridium acetobutylicum (strain ATCC 824 / DSM 792 / JCM 1419 / IAM 19013 / LMG 5710 / NBRC 13948 / NRRL B-527 / VKM B-1787 / 2291 / W), this protein is UPF0291 protein CA_C2726.